Here is a 120-residue protein sequence, read N- to C-terminus: Dihydroneopterin aldolase (120 aa).

Substrate-binding residues include Glu-20 and Met-114.

The protein belongs to the archaeal dihydroneopterin aldolase family. As to quaternary structure, homotetramer.

It catalyses the reaction 7,8-dihydroneopterin = 6-hydroxymethyl-7,8-dihydropterin + glycolaldehyde. In terms of biological role, catalyzes the conversion of 7,8-dihydroneopterin (H2Neo) to 6-hydroxymethyl-7,8-dihydropterin (6-HMD). The protein is Dihydroneopterin aldolase of Picrophilus torridus (strain ATCC 700027 / DSM 9790 / JCM 10055 / NBRC 100828 / KAW 2/3).